A 137-amino-acid polypeptide reads, in one-letter code: Large ribosomal subunit protein uL16 (137 aa).

The protein belongs to the universal ribosomal protein uL16 family. As to quaternary structure, part of the 50S ribosomal subunit.

Binds 23S rRNA and is also seen to make contacts with the A and possibly P site tRNAs. The protein is Large ribosomal subunit protein uL16 of Stutzerimonas stutzeri (strain A1501) (Pseudomonas stutzeri).